The following is a 660-amino-acid chain: MTEENKSFYITTPIYYPSGKLHIGHAYTTVAGDAMARYKCMQGYNVHYLTGTDEHGQKIQKKAEELNVTPQAYVDNIVAGIKELWEKMDISYDDFIRTTEDRHKDVVEKIFKQLVDQGDIYLDEYEGWYSVQDETFYTEHQLVDPIMEGDKVVGGKSPDSGHDVELVREESYFFRMGKYVDRLLKFYEDNPHFIQPESRKNEMINNFIKPGLEDLAVSRTSFDWGVRVPGNPKHVIYVWVDALSNYITALGYGTENEEMYKKFWPADVHLVGKEIVRFHTIYWPIILMALDLPLPKKVFAHGWILMKDGKMSKSKGNVVDPVILIDRYGLDALRYYLLREVPFGSDGVFTPEGFVERINFDLANDLGNLLNRTVAMIDKYFNGEIPAFKANVTEFDETLVTFAKDTLKKVEEAMENMEFSVALSSIWQLVSRTNKYIDETQPWVLAKDEDDREKLASVMAHLAEVLRQTGIMLMPFLTVAPSKMFAQLGLTDEAHTSWGSLSTIGCIPAGTKVEKGQPIFPRLEMDVEVAYIKEQMKASAPKVEEKKEEEPKAEEITIDDFFKVELRVAEVLSAEPVKKADKLLKIQLDLGTEKRQVVSGIAKFYSPEDLKGKKVICVTNLKPVKLRGELSQGMILAGEENGVLSLASIDQNIPNGTKIK.

Positions Y15–H25 match the 'HIGH' region motif. A 'KMSKS' region motif is present at residues K310 to S314. K313 is a binding site for ATP. The 101-residue stretch at D560–K660 folds into the tRNA-binding domain.

It belongs to the class-I aminoacyl-tRNA synthetase family. MetG type 2B subfamily. As to quaternary structure, homodimer.

The protein resides in the cytoplasm. It carries out the reaction tRNA(Met) + L-methionine + ATP = L-methionyl-tRNA(Met) + AMP + diphosphate. Is required not only for elongation of protein synthesis but also for the initiation of all mRNA translation through initiator tRNA(fMet) aminoacylation. The polypeptide is Methionine--tRNA ligase 1 (Bacillus anthracis).